The sequence spans 1364 residues: DNA-directed RNA polymerase subunit beta' (1364 aa).

Residues Cys250, Cys317, Cys324, and Cys327 each coordinate Zn(2+). Residues 1318–1342 (TRHNIDPSASTNAAFTRPDVDNELK) are disordered.

It belongs to the RNA polymerase beta' chain family. RpoC2 subfamily. In cyanobacteria the RNAP catalytic core is composed of 2 alpha, 1 beta, 1 beta', 1 gamma and 1 omega subunit. When a sigma factor is associated with the core the holoenzyme is formed, which can initiate transcription. It depends on Zn(2+) as a cofactor.

The catalysed reaction is RNA(n) + a ribonucleoside 5'-triphosphate = RNA(n+1) + diphosphate. DNA-dependent RNA polymerase catalyzes the transcription of DNA into RNA using the four ribonucleoside triphosphates as substrates. This chain is DNA-directed RNA polymerase subunit beta', found in Synechococcus sp. (strain CC9902).